Here is a 408-residue protein sequence, read N- to C-terminus: Glutamate N-acetyltransferase (408 aa).

The substrate site is built by T150, K176, T189, E271, N403, and T408. Catalysis depends on T189, which acts as the Nucleophile.

The protein belongs to the ArgJ family. Heterotetramer of two alpha and two beta chains.

Its subcellular location is the cytoplasm. The catalysed reaction is N(2)-acetyl-L-ornithine + L-glutamate = N-acetyl-L-glutamate + L-ornithine. It participates in amino-acid biosynthesis; L-arginine biosynthesis; L-ornithine and N-acetyl-L-glutamate from L-glutamate and N(2)-acetyl-L-ornithine (cyclic): step 1/1. In terms of biological role, catalyzes the transfer of the acetyl group from N(2)-acetylornithine to glutamate, forming N-acetylglutamate and L-ornithine. The sequence is that of Glutamate N-acetyltransferase from Methanococcus maripaludis (strain C6 / ATCC BAA-1332).